Reading from the N-terminus, the 305-residue chain is UDP-3-O-acyl-N-acetylglucosamine deacetylase (305 aa).

Zn(2+)-binding residues include His79, His238, and Asp242. Residue His265 is the Proton donor of the active site.

Belongs to the LpxC family. It depends on Zn(2+) as a cofactor.

The enzyme catalyses a UDP-3-O-[(3R)-3-hydroxyacyl]-N-acetyl-alpha-D-glucosamine + H2O = a UDP-3-O-[(3R)-3-hydroxyacyl]-alpha-D-glucosamine + acetate. It functions in the pathway glycolipid biosynthesis; lipid IV(A) biosynthesis; lipid IV(A) from (3R)-3-hydroxytetradecanoyl-[acyl-carrier-protein] and UDP-N-acetyl-alpha-D-glucosamine: step 2/6. Catalyzes the hydrolysis of UDP-3-O-myristoyl-N-acetylglucosamine to form UDP-3-O-myristoylglucosamine and acetate, the committed step in lipid A biosynthesis. This is UDP-3-O-acyl-N-acetylglucosamine deacetylase from Salmonella arizonae (strain ATCC BAA-731 / CDC346-86 / RSK2980).